A 229-amino-acid polypeptide reads, in one-letter code: Probable coenzyme A transferase subunit alpha (229 aa).

26–32 (GGFGGVG) lines the CoA pocket.

It belongs to the 3-oxoacid CoA-transferase subunit A family. Heterodimer of a subunit alpha and a subunit beta.

The chain is Probable coenzyme A transferase subunit alpha (yodS) from Bacillus subtilis (strain 168).